We begin with the raw amino-acid sequence, 379 residues long: Protein RecA (379 aa).

The segment at 1–23 (MSVDVKSAQSSKSDSLQVEPRPG) is disordered. Positions 7–16 (SAQSSKSDSL) are enriched in polar residues. ATP is bound at residue 84–91 (GPESSGKT).

The protein belongs to the RecA family.

Its subcellular location is the cytoplasm. In terms of biological role, can catalyze the hydrolysis of ATP in the presence of single-stranded DNA, the ATP-dependent uptake of single-stranded DNA by duplex DNA, and the ATP-dependent hybridization of homologous single-stranded DNAs. It interacts with LexA causing its activation and leading to its autocatalytic cleavage. The protein is Protein RecA of Prochlorococcus marinus (strain MIT 9313).